Reading from the N-terminus, the 254-residue chain is Short-chain dehydrogenase srdF (254 aa).

NADP(+) contacts are provided by I18, S37, E67, N95, Y167, K171, V199, and T201. Catalysis depends on Y167, which acts as the Proton donor. K171 acts as the Lowers pKa of active site Tyr in catalysis.

This sequence belongs to the short-chain dehydrogenases/reductases (SDR) family.

Its function is as follows. Short-chain dehydrogenase; part of the gene cluster that mediates the biosynthesis of sordarial, a salicylic aldehyde structurally related to the phytotoxin pyriculol. The most interesting aspect of this pathway is formation of an aromatic product from the highly reducing polyketide synthase srdA. SrdA synthesizes a reduced polyketide chain from one molecule of acetyl-CoA and five molecules of malonyl-CoA. The polyketide chain is then reductively released as an aldehyde. The oxidoreductases srdC, srdD and srdE then oxidize one of the hydroxy groups to facilitate the intramolecular aldol condensation, followed by dehydration to yield a salicylic aldehyde. This aldehyde can undergo facile reduction by endogenous reductases to yield the alcohol 1-hydroxy-2-hydroxymethyl-3-pent-1,3-dienylbenzene. The flavin-dependent srdI counteract against the propensity of the aldehydes to be reduced under physiological conditions and is responsible for reoxidizing 1-hydroxy-2-hydroxymethyl-3-pent-1,3-dienylbenzene back to the salicylic aldehyde. This salicylic aldehyde is then selectively epoxidized by the cupin-domain-containing oxidoreductase srdB to yield the epoxide, which can be hydrolyzed stereoselectively by the hydrolase srdG to give the final product sordarial. This Neurospora crassa (strain ATCC 24698 / 74-OR23-1A / CBS 708.71 / DSM 1257 / FGSC 987) protein is Short-chain dehydrogenase srdF.